A 226-amino-acid chain; its full sequence is ATP synthase F(0) complex subunit a (226 aa).

5 consecutive transmembrane segments (helical) span residues 5-25 (LFAP…LIII), 68-88 (WSLM…LGML), 97-117 (QLSM…TTGF), 136-156 (FLIP…PVAW), and 189-209 (AFIT…VALI).

This sequence belongs to the ATPase A chain family. Component of the ATP synthase complex composed at least of ATP5F1A/subunit alpha, ATP5F1B/subunit beta, ATP5MC1/subunit c (homooctomer), MT-ATP6/subunit a, MT-ATP8/subunit 8, ATP5ME/subunit e, ATP5MF/subunit f, ATP5MG/subunit g, ATP5MK/subunit k, ATP5MJ/subunit j, ATP5F1C/subunit gamma, ATP5F1D/subunit delta, ATP5F1E/subunit epsilon, ATP5PF/subunit F6, ATP5PB/subunit b, ATP5PD/subunit d, ATP5PO/subunit OSCP. ATP synthase complex consists of a soluble F(1) head domain (subunits alpha(3) and beta(3)) - the catalytic core - and a membrane F(0) domain - the membrane proton channel (subunits c, a, 8, e, f, g, k and j). These two domains are linked by a central stalk (subunits gamma, delta, and epsilon) rotating inside the F1 region and a stationary peripheral stalk (subunits F6, b, d, and OSCP). Interacts with DNAJC30; interaction is direct.

The protein localises to the mitochondrion inner membrane. It catalyses the reaction H(+)(in) = H(+)(out). In terms of biological role, subunit a, of the mitochondrial membrane ATP synthase complex (F(1)F(0) ATP synthase or Complex V) that produces ATP from ADP in the presence of a proton gradient across the membrane which is generated by electron transport complexes of the respiratory chain. ATP synthase complex consist of a soluble F(1) head domain - the catalytic core - and a membrane F(1) domain - the membrane proton channel. These two domains are linked by a central stalk rotating inside the F(1) region and a stationary peripheral stalk. During catalysis, ATP synthesis in the catalytic domain of F(1) is coupled via a rotary mechanism of the central stalk subunits to proton translocation. With the subunit c (ATP5MC1), forms the proton-conducting channel in the F(0) domain, that contains two crucial half-channels (inlet and outlet) that facilitate proton movement from the mitochondrial intermembrane space (IMS) into the matrix. Protons are taken up via the inlet half-channel and released through the outlet half-channel, following a Grotthuss mechanism. The polypeptide is ATP synthase F(0) complex subunit a (Balaenoptera physalus (Fin whale)).